A 104-amino-acid polypeptide reads, in one-letter code: Protein P-30 (104 aa).

Q1 is modified (pyrrolidone carboxylic acid). The active-site Proton acceptor is the H10. Disulfide bonds link C19–C68, C30–C75, C48–C90, and C87–C104. Substrate is bound at residue 31–35 (KDKNT). H97 acts as the Proton donor in catalysis.

This sequence belongs to the pancreatic ribonuclease family.

Basic protein with antiproliferative/cytotoxic activity against several tumor cell lines in vitro, as well as antitumor in vivo. It exhibits a ribonuclease-like activity against high molecular weight ribosomal RNA. This chain is Protein P-30, found in Lithobates pipiens (Northern leopard frog).